The sequence spans 338 residues: (2Z,6E)-hedycaryol synthase (338 aa).

2 residues coordinate Mg(2+): Asp82 and Glu87. A DDXXXE motif motif is present at residues 82-87; sequence DDQIDE. Arg175 contributes to the substrate binding site. Mg(2+)-binding residues include Asn221 and Ser225. Positions 221–229 match the NXXXSXXXE motif motif; sequence NDVFSVERE. Arg228 provides a ligand contact to substrate. Glu229 is a binding site for Mg(2+).

It belongs to the terpene synthase family. As to quaternary structure, homodimer. Mg(2+) is required as a cofactor.

It catalyses the reaction (2E,6E)-farnesyl diphosphate + H2O = (2Z,6E)-hedycaryol + diphosphate. It participates in secondary metabolite biosynthesis; terpenoid biosynthesis. Functionally, catalyzes the conversion of (2E,6E)-farnesyl diphosphate (FPP) into (2Z,6E)-hedycaryol via a 1,11-cyclization. The sequence is that of (2Z,6E)-hedycaryol synthase from Kitasatospora setae (strain ATCC 33774 / DSM 43861 / JCM 3304 / KCC A-0304 / NBRC 14216 / KM-6054) (Streptomyces setae).